Reading from the N-terminus, the 111-residue chain is Cell division protein FtsB (111 aa).

Residues 1-3 lie on the Cytoplasmic side of the membrane; that stretch reads MRL. The chain crosses the membrane as a helical span at residues 4-21; it reads ITLFLLLLLLAIQYPLWL. Residues 22-111 are Periplasmic-facing; sequence GKGGWLRVWD…PAALQPNHRH (90 aa). Positions 28–64 form a coiled coil; it reads RVWDMQKQVASQNQRNAELKQRNLKLEGEVKDLKEGT. The tract at residues 90-111 is disordered; sequence PAPKTSETPLPPPAALQPNHRH.

Belongs to the FtsB family. In terms of assembly, part of a complex composed of FtsB, FtsL and FtsQ.

Its subcellular location is the cell inner membrane. In terms of biological role, essential cell division protein. May link together the upstream cell division proteins, which are predominantly cytoplasmic, with the downstream cell division proteins, which are predominantly periplasmic. The sequence is that of Cell division protein FtsB from Ralstonia nicotianae (strain ATCC BAA-1114 / GMI1000) (Ralstonia solanacearum).